We begin with the raw amino-acid sequence, 139 residues long: Nucleoside diphosphate kinase (139 aa).

Residues K11, F59, R87, T93, R104, and N114 each contribute to the ATP site. The active-site Pros-phosphohistidine intermediate is the H117.

Belongs to the NDK family. In terms of assembly, homotetramer. Mg(2+) serves as cofactor.

Its subcellular location is the cytoplasm. It carries out the reaction a 2'-deoxyribonucleoside 5'-diphosphate + ATP = a 2'-deoxyribonucleoside 5'-triphosphate + ADP. The enzyme catalyses a ribonucleoside 5'-diphosphate + ATP = a ribonucleoside 5'-triphosphate + ADP. Its function is as follows. Major role in the synthesis of nucleoside triphosphates other than ATP. The ATP gamma phosphate is transferred to the NDP beta phosphate via a ping-pong mechanism, using a phosphorylated active-site intermediate. This chain is Nucleoside diphosphate kinase, found in Pasteurella multocida (strain Pm70).